Consider the following 457-residue polypeptide: Glutamate--tRNA ligase 2 (457 aa).

The 'HIGH' region signature appears at 8–18 (PSPTGYIHIGN). The 'KMSKS' region signature appears at 249–253 (GFSKR). Lys-252 contacts ATP.

The protein belongs to the class-I aminoacyl-tRNA synthetase family. Glutamate--tRNA ligase type 1 subfamily. As to quaternary structure, monomer.

Its subcellular location is the cytoplasm. It catalyses the reaction tRNA(Glu) + L-glutamate + ATP = L-glutamyl-tRNA(Glu) + AMP + diphosphate. Functionally, catalyzes the attachment of glutamate to tRNA(Glu) in a two-step reaction: glutamate is first activated by ATP to form Glu-AMP and then transferred to the acceptor end of tRNA(Glu). The polypeptide is Glutamate--tRNA ligase 2 (Bartonella tribocorum (strain CIP 105476 / IBS 506)).